The following is a 337-amino-acid chain: 4-hydroxy-3-methylbut-2-enyl diphosphate reductase (337 aa).

Cysteine 25 serves as a coordination point for [4Fe-4S] cluster. Residues histidine 54 and histidine 87 each coordinate (2E)-4-hydroxy-3-methylbut-2-enyl diphosphate. Dimethylallyl diphosphate contacts are provided by histidine 54 and histidine 87. The isopentenyl diphosphate site is built by histidine 54 and histidine 87. [4Fe-4S] cluster is bound at residue cysteine 109. Histidine 137 provides a ligand contact to (2E)-4-hydroxy-3-methylbut-2-enyl diphosphate. Histidine 137 contributes to the dimethylallyl diphosphate binding site. An isopentenyl diphosphate-binding site is contributed by histidine 137. Glutamate 139 (proton donor) is an active-site residue. Threonine 177 contacts (2E)-4-hydroxy-3-methylbut-2-enyl diphosphate. [4Fe-4S] cluster is bound at residue cysteine 207. 4 residues coordinate (2E)-4-hydroxy-3-methylbut-2-enyl diphosphate: serine 235, serine 236, asparagine 237, and serine 280. 4 residues coordinate dimethylallyl diphosphate: serine 235, serine 236, asparagine 237, and serine 280. Positions 235, 236, 237, and 280 each coordinate isopentenyl diphosphate.

This sequence belongs to the IspH family. [4Fe-4S] cluster is required as a cofactor.

It catalyses the reaction isopentenyl diphosphate + 2 oxidized [2Fe-2S]-[ferredoxin] + H2O = (2E)-4-hydroxy-3-methylbut-2-enyl diphosphate + 2 reduced [2Fe-2S]-[ferredoxin] + 2 H(+). The enzyme catalyses dimethylallyl diphosphate + 2 oxidized [2Fe-2S]-[ferredoxin] + H2O = (2E)-4-hydroxy-3-methylbut-2-enyl diphosphate + 2 reduced [2Fe-2S]-[ferredoxin] + 2 H(+). The protein operates within isoprenoid biosynthesis; dimethylallyl diphosphate biosynthesis; dimethylallyl diphosphate from (2E)-4-hydroxy-3-methylbutenyl diphosphate: step 1/1. It functions in the pathway isoprenoid biosynthesis; isopentenyl diphosphate biosynthesis via DXP pathway; isopentenyl diphosphate from 1-deoxy-D-xylulose 5-phosphate: step 6/6. Its function is as follows. Catalyzes the conversion of 1-hydroxy-2-methyl-2-(E)-butenyl 4-diphosphate (HMBPP) into a mixture of isopentenyl diphosphate (IPP) and dimethylallyl diphosphate (DMAPP). Acts in the terminal step of the DOXP/MEP pathway for isoprenoid precursor biosynthesis. The polypeptide is 4-hydroxy-3-methylbut-2-enyl diphosphate reductase (Leifsonia xyli subsp. xyli (strain CTCB07)).